We begin with the raw amino-acid sequence, 139 residues long: Large ribosomal subunit protein bL17 (139 aa).

This sequence belongs to the bacterial ribosomal protein bL17 family. As to quaternary structure, part of the 50S ribosomal subunit. Contacts protein L32.

The sequence is that of Large ribosomal subunit protein bL17 from Cereibacter sphaeroides (strain ATCC 17029 / ATH 2.4.9) (Rhodobacter sphaeroides).